The chain runs to 469 residues: Transcription factor E2FB (469 aa).

Disordered regions lie at residues 1–28 (MSEE…PPLV) and 84–118 (QTPV…AGSP). Composition is skewed to polar residues over residues 8–22 (QFPS…SLSS) and 100–118 (SAKS…AGSP). A DNA-binding region spans residues 129-194 (RYDSSLGLLT…TLKNRIQWKG (66 aa)). A coiled-coil region spans residues 202–246 (ETIESIANLQDEVQNLAAEEARLDDQIRESQERLTSLSEDENNKR). Positions 210–238 (LQDEVQNLAAEEARLDDQIRESQERLTSL) are leucine-zipper. The tract at residues 319 to 374 (PQADEPSNVPDEPSNVPDVPSNLPSTSGLPENHDVSMPMKEESTERNMETQEVDDT) is disordered. The span at 349 to 374 (ENHDVSMPMKEESTERNMETQEVDDT) shows a compositional bias: basic and acidic residues. A retinoblastoma protein binding region spans residues 403 to 419 (DYWFRSEVGEVSITDMW). Residues 426 to 469 (DWNQMITFDQDHAGPSDNKILEQPQTPSSPTPEESTATRSPTGS) form a disordered region. Over residues 447 to 469 (EQPQTPSSPTPEESTATRSPTGS) the composition is skewed to low complexity.

This sequence belongs to the E2F/DP family. Heterodimer with DP proteins. Interacts (via dimerization domain) preferentially with DPA, but also with DPB. Interacts with PURA1 and retinoblastoma-related protein RBR1. Component of a DREAM-like complex which modulates a variety of developmentally regulated genes and of the mitotic genes in proliferating and differentiated cells. Interacts with MYB3R4 only at early stages of leaves development. Post-translationally, phosphorylated. In terms of tissue distribution, expressed in proliferating cells and several differentiated tissues. Detected in inflorescence and shoot apical meristems, cotyledonary vascular tissues, leaf primordia, young leaves, base of trichomes, central cylinder and elongation zone of roots, lateral root primordia, flowers, pistils of immature flowers and pollen grains.

The protein localises to the cytoplasm. It is found in the nucleus. Functionally, transcription activator that binds DNA cooperatively with DP proteins through the E2 recognition site, 5'-TTTC[CG]CGC-3' found in the promoter region of a number of genes whose products are involved in cell cycle regulation or in DNA replication. The binding of retinoblastoma-related proteins represses transactivation. Involved in the control of cell-cycle progression from G1 to S phase and from G2 to M phase. Stimulates cell proliferation and delays differentiation. Represses cell enlargement and endoreduplication in auxin-free conditions. The polypeptide is Transcription factor E2FB (E2FB) (Arabidopsis thaliana (Mouse-ear cress)).